Here is a 92-residue protein sequence, read N- to C-terminus: Small ribosomal subunit protein bS16 (92 aa).

The protein belongs to the bacterial ribosomal protein bS16 family.

The chain is Small ribosomal subunit protein bS16 from Desulforudis audaxviator (strain MP104C).